Here is a 143-residue protein sequence, read N- to C-terminus: Cytochrome c-type biogenesis protein CcmE (143 aa).

At 1–8 (MNPVRRRK) the chain is on the cytoplasmic side. Residues 9 to 29 (LFILLFALTILSAAAALVLYA) form a helical; Signal-anchor for type II membrane protein membrane-spanning segment. Over 30–143 (LRQNISLFYT…KSALADKVKQ (114 aa)) the chain is Periplasmic. The heme site is built by His-124 and Tyr-128.

It belongs to the CcmE/CycJ family.

Its subcellular location is the cell inner membrane. Heme chaperone required for the biogenesis of c-type cytochromes. Transiently binds heme delivered by CcmC and transfers the heme to apo-cytochromes in a process facilitated by CcmF and CcmH. The sequence is that of Cytochrome c-type biogenesis protein CcmE from Legionella pneumophila (strain Corby).